Reading from the N-terminus, the 732-residue chain is Catalase-peroxidase (732 aa).

The segment at 1 to 20 (MDKDSKRPVVGSTVRGGMSN) is disordered. A cross-link (tryptophyl-tyrosyl-methioninium (Trp-Tyr) (with M-246)) is located at residues 92 to 220 (WHSAGTYRMG…LAAVQMGLIY (129 aa)). Histidine 93 (proton acceptor) is an active-site residue. The segment at residues 220–246 (YVNPEGPDGNPDPVAAGYDVIETFARM) is a cross-link (tryptophyl-tyrosyl-methioninium (Tyr-Met) (with W-92)). Histidine 261 serves as a coordination point for heme b.

The protein belongs to the peroxidase family. Peroxidase/catalase subfamily. In terms of assembly, homodimer or homotetramer. Heme b serves as cofactor. Post-translationally, formation of the three residue Trp-Tyr-Met cross-link is important for the catalase, but not the peroxidase activity of the enzyme.

The catalysed reaction is H2O2 + AH2 = A + 2 H2O. The enzyme catalyses 2 H2O2 = O2 + 2 H2O. In terms of biological role, bifunctional enzyme with both catalase and broad-spectrum peroxidase activity. In Desulfosudis oleivorans (strain DSM 6200 / JCM 39069 / Hxd3) (Desulfococcus oleovorans), this protein is Catalase-peroxidase.